An 84-amino-acid chain; its full sequence is Putative pelota-like protein YCL001W-B (84 aa).

It belongs to the eukaryotic release factor 1 family. Pelota subfamily. Highly divergent.

This is Putative pelota-like protein YCL001W-B from Saccharomyces cerevisiae (strain ATCC 204508 / S288c) (Baker's yeast).